Here is a 379-residue protein sequence, read N- to C-terminus: Cobalt-precorrin-5B C(1)-methyltransferase (379 aa).

This sequence belongs to the CbiD family.

It catalyses the reaction Co-precorrin-5B + S-adenosyl-L-methionine = Co-precorrin-6A + S-adenosyl-L-homocysteine. It participates in cofactor biosynthesis; adenosylcobalamin biosynthesis; cob(II)yrinate a,c-diamide from sirohydrochlorin (anaerobic route): step 6/10. Its function is as follows. Catalyzes the methylation of C-1 in cobalt-precorrin-5B to form cobalt-precorrin-6A. In Salmonella heidelberg (strain SL476), this protein is Cobalt-precorrin-5B C(1)-methyltransferase.